Consider the following 348-residue polypeptide: RNA 3'-terminal phosphate cyclase (348 aa).

Residues Q107 and H290–Q294 contribute to the ATP site. H316 serves as the catalytic Tele-AMP-histidine intermediate.

The protein belongs to the RNA 3'-terminal cyclase family. Type 1 subfamily.

It is found in the cytoplasm. It catalyses the reaction a 3'-end 3'-phospho-ribonucleotide-RNA + ATP = a 3'-end 2',3'-cyclophospho-ribonucleotide-RNA + AMP + diphosphate. Its function is as follows. Catalyzes the conversion of 3'-phosphate to a 2',3'-cyclic phosphodiester at the end of RNA. The mechanism of action of the enzyme occurs in 3 steps: (A) adenylation of the enzyme by ATP; (B) transfer of adenylate to an RNA-N3'P to produce RNA-N3'PP5'A; (C) and attack of the adjacent 2'-hydroxyl on the 3'-phosphorus in the diester linkage to produce the cyclic end product. The biological role of this enzyme is unknown but it is likely to function in some aspects of cellular RNA processing. This Nostoc punctiforme (strain ATCC 29133 / PCC 73102) protein is RNA 3'-terminal phosphate cyclase.